Reading from the N-terminus, the 393-residue chain is Probable RNA methyltransferase sce3898 (393 aa).

The Proton acceptor role is filled by Glu82. Positions 90-329 constitute a Radical SAM core domain; the sequence is RPGRYSACVS…VRSARLDAFR (240 aa). A disulfide bridge links Cys97 with Cys353. 3 residues coordinate [4Fe-4S] cluster: Cys104, Cys108, and Cys111. Residues 157-158, 212-214, and Asn294 contribute to the S-adenosyl-L-methionine site; these read GE and SLG. The active-site S-methylcysteine intermediate is Cys353. The interval 357–393 is disordered; sequence ARPSAEAQRPGGRRAPPRPGATAGAADVGPSAPPRPA. The span at 373 to 382 shows a compositional bias: low complexity; that stretch reads PRPGATAGAA.

The protein belongs to the radical SAM superfamily. RlmN family. [4Fe-4S] cluster is required as a cofactor.

The protein localises to the cytoplasm. The chain is Probable RNA methyltransferase sce3898 from Sorangium cellulosum (strain So ce56) (Polyangium cellulosum (strain So ce56)).